The following is a 392-amino-acid chain: Cytochrome b (392 aa).

The next 4 membrane-spanning stretches (helical) occupy residues 38 to 58 (FGSLAGICLVIQIVTGVFLAM), 82 to 104 (WLLRYMHANGASMFLIVVHLHIF), 119 to 139 (VRCLGVVIFLLMIVTAFTGYV), and 185 to 205 (FFSLHHLLPFILVGASLLHLA). The heme b site is built by His-88 and His-102. Residues His-189 and His-203 each contribute to the heme b site. A ubiquinone is bound at residue His-208. The next 4 membrane-spanning stretches (helical) occupy residues 231-251 (FYVKDLVGWVAFAIFFSIWIF), 295-315 (SGGVAAIAPVFICLLALPFFK), 327-347 (IHQGIFWLLLADRLLLGWIGC), and 354-373 (FVTIGQIPPFVFFLFFAITP).

This sequence belongs to the cytochrome b family. As to quaternary structure, the main subunits of complex b-c1 are: cytochrome b, cytochrome c1 and the Rieske protein. Heme b serves as cofactor.

The protein localises to the mitochondrion inner membrane. Its function is as follows. Component of the ubiquinol-cytochrome c reductase complex (complex III or cytochrome b-c1 complex) that is part of the mitochondrial respiratory chain. The b-c1 complex mediates electron transfer from ubiquinol to cytochrome c. Contributes to the generation of a proton gradient across the mitochondrial membrane that is then used for ATP synthesis. This Pisum sativum (Garden pea) protein is Cytochrome b (MT-CYB).